The sequence spans 514 residues: 2,3-bisphosphoglycerate-independent phosphoglycerate mutase (514 aa).

Asp14 and Ser64 together coordinate Mn(2+). Ser64 serves as the catalytic Phosphoserine intermediate. Substrate contacts are provided by residues His125, 155–156 (RD), Arg187, Arg193, 263–266 (RADR), and Lys336. Residues Asp403, His407, Asp444, His445, and His463 each contribute to the Mn(2+) site.

This sequence belongs to the BPG-independent phosphoglycerate mutase family. Monomer. Mn(2+) serves as cofactor.

The catalysed reaction is (2R)-2-phosphoglycerate = (2R)-3-phosphoglycerate. Its pathway is carbohydrate degradation; glycolysis; pyruvate from D-glyceraldehyde 3-phosphate: step 3/5. In terms of biological role, catalyzes the interconversion of 2-phosphoglycerate and 3-phosphoglycerate. This Shewanella sp. (strain ANA-3) protein is 2,3-bisphosphoglycerate-independent phosphoglycerate mutase.